An 822-amino-acid polypeptide reads, in one-letter code: IQ and AAA domain-containing protein 1-like (822 aa).

The IQ domain maps to 206 to 235 (QDQGAIVIQKVWKGYLQRKRIEQDRRMEME). Over residues 338 to 363 (RQELEAQAQENKKKEQEKNKDKVKEK) the composition is skewed to basic and acidic residues. Disordered regions lie at residues 338–378 (RQEL…KAKK) and 457–484 (REET…KDLT). Positions 464–479 (KSPKKKGGKKSGKKKK) are enriched in basic residues. 569 to 576 (GPSGMGKK) provides a ligand contact to ATP.

It belongs to the AAA ATPase family.

The chain is IQ and AAA domain-containing protein 1-like (Iqca1l) from Rattus norvegicus (Rat).